Reading from the N-terminus, the 507-residue chain is Rhomboid protease GluP (507 aa).

5 consecutive transmembrane segments (helical) span residues 179 to 199 (FTYL…INGG), 229 to 249 (IVLH…WSVG), 261 to 281 (FLLI…VFSP), 283 to 303 (PSAG…YVAL), and 312 to 332 (TIGT…FAVS). Serine 288 functions as the Nucleophile in the catalytic mechanism. Catalysis depends on histidine 339, which acts as the Charge relay system. The next 2 membrane-spanning stretches (helical) occupy residues 340-360 (IGGL…KAGA) and 365-385 (LLSA…GLHS). TPR repeat units follow at residues 424 to 457 (ADLL…EPKD) and 458 to 491 (HASY…KPKE).

Belongs to the peptidase S54 family.

It localises to the cell membrane. It catalyses the reaction Cleaves type-1 transmembrane domains using a catalytic dyad composed of serine and histidine that are contributed by different transmembrane domains.. With respect to regulation, inhibited by dichloroisocoumarin (DCI) and N-p-tosyl-L-phenylalanine chloromethyl ketone (TPCK), but not by other serine protease inhibitors such as sulfonyl fluoride PMSF and 4-(2-aminoethyl)benzenesulfonyl fluoride (AEBSF). Functionally, rhomboid-type serine protease that catalyzes intramembrane proteolysis. Important for normal cell division and sporulation. May act as a glucose exporter. In Bacillus subtilis (strain 168), this protein is Rhomboid protease GluP (gluP).